We begin with the raw amino-acid sequence, 444 residues long: Acyl-CoA (8-3)-desaturase (444 aa).

Methionine 1 is modified (N-acetylmethionine). Topologically, residues 1–121 (MAPDPVAAET…FRELRATVER (121 aa)) are cytoplasmic. A Cytochrome b5 heme-binding domain is found at 17–94 (PRYFTWDEVA…MNSLLIGELS (78 aa)). A helical transmembrane segment spans residues 122-142 (MGLMKANHVFFLLYLLHILLL). The Lumenal portion of the chain corresponds to 143-145 (DGA). The helical transmembrane segment at 146–170 (AWLTLWVFGTSFLPFLLCAVLLSAV) threads the bilayer. Residues 171-267 (QAQAGWLQHD…PYNHQHKYFF (97 aa)) lie on the Cytoplasmic side of the membrane. Residues 179–183 (HDFGH) carry the Histidine box-1 motif. Positions 216 to 220 (HFQHH) match the Histidine box-2 motif. Residues 268–288 (LIGPPALLPLYFQWYIFYFVI) traverse the membrane as a helical segment. Residues 289 to 305 (QRKKWVDLAWMITFYVR) are Lumenal-facing. A helical transmembrane segment spans residues 306–326 (FFLTYVPLLGLKAFLGLFFIV). Residues 327–444 (RFLESNWFVW…QLWLDAYLHQ (118 aa)) lie on the Cytoplasmic side of the membrane. Residues 382 to 386 (QIEHH) carry the Histidine box-3 motif.

The protein belongs to the fatty acid desaturase type 1 family. As to expression, widely expressed, with highest levels in liver, brain, adrenal gland and heart. Highly expressed in fetal liver and brain.

It is found in the endoplasmic reticulum membrane. It localises to the mitochondrion. The catalysed reaction is (8Z,11Z,14Z)-eicosatrienoyl-CoA + 2 Fe(II)-[cytochrome b5] + O2 + 2 H(+) = (5Z,8Z,11Z,14Z)-eicosatetraenoyl-CoA + 2 Fe(III)-[cytochrome b5] + 2 H2O. It carries out the reaction (8Z,11Z,14Z,17Z)-eicosatetraenoyl-CoA + 2 Fe(II)-[cytochrome b5] + O2 + 2 H(+) = (5Z,8Z,11Z,14Z,17Z)-eicosapentaenoyl-CoA + 2 Fe(III)-[cytochrome b5] + 2 H2O. It catalyses the reaction (11E)-octadecenoyl-CoA + 2 Fe(II)-[cytochrome b5] + O2 + 2 H(+) = (5Z,11E)-octadecadienoyl-CoA + 2 Fe(III)-[cytochrome b5] + 2 H2O. The protein operates within lipid metabolism; polyunsaturated fatty acid biosynthesis. Acts as a front-end fatty acyl-coenzyme A (CoA) desaturase that introduces a cis double bond at carbon 5 located between a preexisting double bond and the carboxyl end of the fatty acyl chain. Involved in biosynthesis of highly unsaturated fatty acids (HUFA) from the essential polyunsaturated fatty acids (PUFA) linoleic acid (LA) (18:2n-6) and alpha-linolenic acid (ALA) (18:3n-3) precursors. Specifically, desaturates dihomo-gamma-linoleoate (DGLA) (20:3n-6) and eicosatetraenoate (ETA) (20:4n-3) to generate arachidonate (AA) (20:4n-6) and eicosapentaenoate (EPA) (20:5n-3), respectively. As a rate limiting enzyme for DGLA (20:3n-6) and AA (20:4n-6)-derived eicosanoid biosynthesis, controls the metabolism of inflammatory lipids like prostaglandin E2, critical for efficient acute inflammatory response and maintenance of epithelium homeostasis. Contributes to membrane phospholipid biosynthesis by providing AA (20:4n-6) as a major acyl chain esterified into phospholipids. In particular, regulates phosphatidylinositol-4,5-bisphosphate levels, modulating inflammatory cytokine production in T-cells. Also desaturates (11E)-octadecenoate (trans-vaccenoate)(18:1n-9), a metabolite in the biohydrogenation pathway of LA (18:2n-6). Functionally, does not exhibit any catalytic activity toward 20:3n-6, but it may enhance FADS2 activity. The protein is Acyl-CoA (8-3)-desaturase of Homo sapiens (Human).